We begin with the raw amino-acid sequence, 120 residues long: Ribosome-binding factor A (120 aa).

The protein belongs to the RbfA family. In terms of assembly, monomer. Binds 30S ribosomal subunits, but not 50S ribosomal subunits or 70S ribosomes.

The protein localises to the cytoplasm. Its function is as follows. One of several proteins that assist in the late maturation steps of the functional core of the 30S ribosomal subunit. Associates with free 30S ribosomal subunits (but not with 30S subunits that are part of 70S ribosomes or polysomes). Required for efficient processing of 16S rRNA. May interact with the 5'-terminal helix region of 16S rRNA. The chain is Ribosome-binding factor A from Clostridium botulinum (strain ATCC 19397 / Type A).